Consider the following 740-residue polypeptide: Phosphoribosylformylglycinamidine synthase subunit PurL (740 aa).

Histidine 53 is a catalytic residue. ATP contacts are provided by tyrosine 56 and lysine 95. Glutamate 97 lines the Mg(2+) pocket. Substrate-binding positions include 98–101 (SHNH) and arginine 120. Catalysis depends on histidine 99, which acts as the Proton acceptor. A Mg(2+)-binding site is contributed by aspartate 121. Glutamine 244 lines the substrate pocket. A Mg(2+)-binding site is contributed by aspartate 272. 316–318 (ESQ) contributes to the substrate binding site. Aspartate 497 and glycine 534 together coordinate ATP. Asparagine 535 lines the Mg(2+) pocket. Serine 537 serves as a coordination point for substrate.

This sequence belongs to the FGAMS family. Monomer. Part of the FGAM synthase complex composed of 1 PurL, 1 PurQ and 2 PurS subunits.

Its subcellular location is the cytoplasm. The enzyme catalyses N(2)-formyl-N(1)-(5-phospho-beta-D-ribosyl)glycinamide + L-glutamine + ATP + H2O = 2-formamido-N(1)-(5-O-phospho-beta-D-ribosyl)acetamidine + L-glutamate + ADP + phosphate + H(+). Its pathway is purine metabolism; IMP biosynthesis via de novo pathway; 5-amino-1-(5-phospho-D-ribosyl)imidazole from N(2)-formyl-N(1)-(5-phospho-D-ribosyl)glycinamide: step 1/2. In terms of biological role, part of the phosphoribosylformylglycinamidine synthase complex involved in the purines biosynthetic pathway. Catalyzes the ATP-dependent conversion of formylglycinamide ribonucleotide (FGAR) and glutamine to yield formylglycinamidine ribonucleotide (FGAM) and glutamate. The FGAM synthase complex is composed of three subunits. PurQ produces an ammonia molecule by converting glutamine to glutamate. PurL transfers the ammonia molecule to FGAR to form FGAM in an ATP-dependent manner. PurS interacts with PurQ and PurL and is thought to assist in the transfer of the ammonia molecule from PurQ to PurL. The chain is Phosphoribosylformylglycinamidine synthase subunit PurL from Rhodospirillum rubrum (strain ATCC 11170 / ATH 1.1.1 / DSM 467 / LMG 4362 / NCIMB 8255 / S1).